Consider the following 205-residue polypeptide: MSVKLRLRRIGRKKIPVYSIVAADQRNARDGRYIEDIGRYFPLREPAEVRLEEDRALYWLENGAQPSDTVRSILRRRGLLLHHHLKKKGESPGEIESAVEEFRERMAEQGEEVKIAVGTRGQDPLERERERAEEIDEEAQLRAQATPLSAVQEETEAEEAEDVETADAEDADAASETDEPEAAADEADETDASADADDNEEPEDE.

The disordered stretch occupies residues 110–205; the sequence is GEEVKIAVGT…ADDNEEPEDE (96 aa). The span at 123–132 shows a compositional bias: basic and acidic residues; that stretch reads DPLERERERA. Positions 153 to 205 are enriched in acidic residues; that stretch reads EETEAEEAEDVETADAEDADAASETDEPEAAADEADETDASADADDNEEPEDE.

This sequence belongs to the bacterial ribosomal protein bS16 family.

This Salinibacter ruber (strain DSM 13855 / M31) protein is Small ribosomal subunit protein bS16.